Reading from the N-terminus, the 178-residue chain is FANCD2 opposite strand protein (178 aa).

The polypeptide is FANCD2 opposite strand protein (Fancd2os) (Mus musculus (Mouse)).